The sequence spans 372 residues: 4-hydroxy-3-methylbut-2-en-1-yl diphosphate synthase (flavodoxin) (372 aa).

The [4Fe-4S] cluster site is built by C270, C273, C305, and E312.

It belongs to the IspG family. Requires [4Fe-4S] cluster as cofactor.

It catalyses the reaction (2E)-4-hydroxy-3-methylbut-2-enyl diphosphate + oxidized [flavodoxin] + H2O + 2 H(+) = 2-C-methyl-D-erythritol 2,4-cyclic diphosphate + reduced [flavodoxin]. It functions in the pathway isoprenoid biosynthesis; isopentenyl diphosphate biosynthesis via DXP pathway; isopentenyl diphosphate from 1-deoxy-D-xylulose 5-phosphate: step 5/6. Its function is as follows. Converts 2C-methyl-D-erythritol 2,4-cyclodiphosphate (ME-2,4cPP) into 1-hydroxy-2-methyl-2-(E)-butenyl 4-diphosphate. In Aliivibrio fischeri (strain ATCC 700601 / ES114) (Vibrio fischeri), this protein is 4-hydroxy-3-methylbut-2-en-1-yl diphosphate synthase (flavodoxin).